The primary structure comprises 269 residues: Cytochrome c oxidase subunit 3 (269 aa).

A run of 7 helical transmembrane segments spans residues 21-41, 45-65, 90-110, 127-147, 167-187, 204-224, and 247-267; these read PWPI…GLTM, IVGN…MTMW, GFLL…WAYF, VGIT…ILLA, ALNG…CQYI, VFFA…IMLA, and ILYL…MYWW.

Belongs to the cytochrome c oxidase subunit 3 family. As to quaternary structure, component of the cytochrome c oxidase (complex IV, CIV), a multisubunit enzyme composed of a catalytic core of 3 subunits and several supernumerary subunits. The complex exists as a monomer or a dimer and forms supercomplexes (SCs) in the inner mitochondrial membrane with ubiquinol-cytochrome c oxidoreductase (cytochrome b-c1 complex, complex III, CIII).

It localises to the mitochondrion inner membrane. The catalysed reaction is 4 Fe(II)-[cytochrome c] + O2 + 8 H(+)(in) = 4 Fe(III)-[cytochrome c] + 2 H2O + 4 H(+)(out). Its function is as follows. Component of the cytochrome c oxidase, the last enzyme in the mitochondrial electron transport chain which drives oxidative phosphorylation. The respiratory chain contains 3 multisubunit complexes succinate dehydrogenase (complex II, CII), ubiquinol-cytochrome c oxidoreductase (cytochrome b-c1 complex, complex III, CIII) and cytochrome c oxidase (complex IV, CIV), that cooperate to transfer electrons derived from NADH and succinate to molecular oxygen, creating an electrochemical gradient over the inner membrane that drives transmembrane transport and the ATP synthase. Cytochrome c oxidase is the component of the respiratory chain that catalyzes the reduction of oxygen to water. Electrons originating from reduced cytochrome c in the intermembrane space (IMS) are transferred via the dinuclear copper A center (CU(A)) of subunit 2 and heme A of subunit 1 to the active site in subunit 1, a binuclear center (BNC) formed by heme A3 and copper B (CU(B)). The BNC reduces molecular oxygen to 2 water molecules using 4 electrons from cytochrome c in the IMS and 4 protons from the mitochondrial matrix. This Wickerhamomyces canadensis (Yeast) protein is Cytochrome c oxidase subunit 3 (COX3).